The chain runs to 310 residues: MAGAAPTTAFGQAVIGPPGSGKTTYCLGMSEFLRALGRRVAVVNLDPANEGLPYECAVDVGELVGLGDVMDALRLGPNGGLLYCMEYLEANLDWLRAKLDPLRGHYFLFDCPGQVELCTHHGALRSIFSQMAQWDLRLTAVHLVDSHYCTDPAKFISVLCTSLATMLHVELPHINLLSKMDLIEHYGKLAFNLDYYTEVLDLSYLLDHLASDPFFRHYRQLNEKLVQLIEDYSLVSFIPLNIQDKESIQRVLQAVDKANGYCFRAQEQRSLEAMMSAAMGADFHFSSTLGIQEKYLAPSNQSVEQEAMQL.

Ala-2 bears the N-acetylalanine mark. 19–24 (GSGKTT) lines the GTP pocket. The Gly-Pro-Asn (GPN)-loop; involved in dimer interface signature appears at 76-78 (GPN). Residue 178-181 (SKMD) participates in GTP binding.

It belongs to the GPN-loop GTPase family. In terms of assembly, heterodimers with GPN1 or GPN3. Binds to RNA polymerase II (RNAPII).

Small GTPase required for proper localization of RNA polymerase II and III (RNAPII and RNAPIII). May act at an RNAP assembly step prior to nuclear import. This chain is GPN-loop GTPase 2, found in Homo sapiens (Human).